The following is a 101-amino-acid chain: Protein Tat (101 aa).

The segment at 1-20 (MEPVDPNLEPWKHPGSQPTT) is disordered. Positions 1–24 (MEPVDPNLEPWKHPGSQPTTACSN) are interaction with human CREBBP. The tract at residues 1-48 (MEPVDPNLEPWKHPGSQPTTACSNCYCKVCCWHCQLCFLKKGLGISYG) is transactivation. The Zn(2+) site is built by Cys22, Cys25, and Cys27. Residues 22-37 (CSNCYCKVCCWHCQLC) form a cysteine-rich region. Position 28 is an N6-acetyllysine; by host PCAF (Lys28). The Zn(2+) site is built by Cys30, His33, Cys34, and Cys37. Residues 38-48 (FLKKGLGISYG) form a core region. The tract at residues 48–101 (GKKKRKPRRGPPQGSKDHQTLIPKQPLPQSQRVSAGQEESKKKVESKAKTDRFA) is disordered. The Nuclear localization signal, RNA-binding (TAR), and protein transduction signature appears at 49 to 57 (KKKRKPRRG). The interaction with the host capping enzyme RNGTT stretch occupies residues 49 to 86 (KKKRKPRRGPPQGSKDHQTLIPKQPLPQSQRVSAGQEE). N6-acetyllysine; by host EP300 and GCN5L2 occurs at positions 50 and 51. Arg52 carries the post-translational modification Asymmetric dimethylarginine; by host PRMT6. Residue Lys71 forms a Glycyl lysine isopeptide (Lys-Gly) (interchain with G-Cter in ubiquitin) linkage. Positions 85-101 (EESKKKVESKAKTDRFA) are enriched in basic and acidic residues.

This sequence belongs to the lentiviruses Tat family. In terms of assembly, interacts with host CCNT1. Associates with the P-TEFb complex composed at least of Tat, P-TEFb (CDK9 and CCNT1), TAR RNA, RNA Pol II. Recruits the HATs CREBBP, TAF1/TFIID, EP300, PCAF and GCN5L2. Interacts with host KAT5/Tip60; this interaction targets the latter to degradation. Interacts with the host deacetylase SIRT1. Interacts with host capping enzyme RNGTT; this interaction stimulates RNGTT. Binds to host KDR, and to the host integrins ITGAV/ITGB3 and ITGA5/ITGB1. Interacts with host KPNB1/importin beta-1 without previous binding to KPNA1/importin alpha-1. Interacts with EIF2AK2. Interacts with host nucleosome assembly protein NAP1L1; this interaction may be required for the transport of Tat within the nucleus, since the two proteins interact at the nuclear rim. Interacts with host C1QBP/SF2P32; this interaction involves lysine-acetylated Tat. Interacts with the host chemokine receptors CCR2, CCR3 and CXCR4. Interacts with host DPP4/CD26; this interaction may trigger an anti-proliferative effect. Interacts with host LDLR. Interacts with the host extracellular matrix metalloproteinase MMP1. Interacts with host PRMT6; this interaction mediates Tat's methylation. Interacts with, and is ubiquitinated by MDM2/Hdm2. Interacts with host PSMC3 and HTATIP2. Interacts with STAB1; this interaction may overcome SATB1-mediated repression of IL2 and IL2RA (interleukin) in T cells by binding to the same domain than HDAC1. Interacts (when acetylated) with human CDK13, thereby increasing HIV-1 mRNA splicing and promoting the production of the doubly spliced HIV-1 protein Nef. Interacts with host TBP; this interaction modulates the activity of transcriptional pre-initiation complex. Interacts with host RELA. Interacts with host PLSCR1; this interaction negatively regulates Tat transactivation activity by altering its subcellular distribution. Post-translationally, asymmetrical arginine methylation by host PRMT6 seems to diminish the transactivation capacity of Tat and affects the interaction with host CCNT1. Acetylation by EP300, CREBBP, GCN5L2/GCN5 and PCAF regulates the transactivation activity of Tat. EP300-mediated acetylation of Lys-50 promotes dissociation of Tat from the TAR RNA through the competitive binding to PCAF's bromodomain. In addition, the non-acetylated Tat's N-terminus can also interact with PCAF. PCAF-mediated acetylation of Lys-28 enhances Tat's binding to CCNT1. Lys-50 is deacetylated by SIRT1. In terms of processing, polyubiquitination by host MDM2 does not target Tat to degradation, but activates its transactivation function and fosters interaction with CCNT1 and TAR RNA. Post-translationally, phosphorylated by EIF2AK2 on serine and threonine residues adjacent to the basic region important for TAR RNA binding and function. Phosphorylation of Tat by EIF2AK2 is dependent on the prior activation of EIF2AK2 by dsRNA.

The protein resides in the host nucleus. The protein localises to the host nucleolus. It is found in the host cytoplasm. Its subcellular location is the secreted. In terms of biological role, transcriptional activator that increases RNA Pol II processivity, thereby increasing the level of full-length viral transcripts. Recognizes a hairpin structure at the 5'-LTR of the nascent viral mRNAs referred to as the transactivation responsive RNA element (TAR) and recruits the cyclin T1-CDK9 complex (P-TEFb complex) that will in turn hyperphosphorylate the RNA polymerase II to allow efficient elongation. The CDK9 component of P-TEFb and other Tat-activated kinases hyperphosphorylate the C-terminus of RNA Pol II that becomes stabilized and much more processive. Other factors such as HTATSF1/Tat-SF1, SUPT5H/SPT5, and HTATIP2 are also important for Tat's function. Besides its effect on RNA Pol II processivity, Tat induces chromatin remodeling of proviral genes by recruiting the histone acetyltransferases (HATs) CREBBP, EP300 and PCAF to the chromatin. This also contributes to the increase in proviral transcription rate, especially when the provirus integrates in transcriptionally silent region of the host genome. To ensure maximal activation of the LTR, Tat mediates nuclear translocation of NF-kappa-B by interacting with host RELA. Through its interaction with host TBP, Tat may also modulate transcription initiation. Tat can reactivate a latently infected cell by penetrating in it and transactivating its LTR promoter. In the cytoplasm, Tat is thought to act as a translational activator of HIV-1 mRNAs. Its function is as follows. Extracellular circulating Tat can be endocytosed by surrounding uninfected cells via the binding to several surface receptors such as CD26, CXCR4, heparan sulfate proteoglycans (HSPG) or LDLR. Neurons are rarely infected, but they internalize Tat via their LDLR. Through its interaction with nuclear HATs, Tat is potentially able to control the acetylation-dependent cellular gene expression. Modulates the expression of many cellular genes involved in cell survival, proliferation or in coding for cytokines or cytokine receptors. Tat plays a role in T-cell and neurons apoptosis. Tat induced neurotoxicity and apoptosis probably contribute to neuroAIDS. Circulating Tat also acts as a chemokine-like and/or growth factor-like molecule that binds to specific receptors on the surface of the cells, affecting many cellular pathways. In the vascular system, Tat binds to ITGAV/ITGB3 and ITGA5/ITGB1 integrins dimers at the surface of endothelial cells and competes with bFGF for heparin-binding sites, leading to an excess of soluble bFGF. The polypeptide is Protein Tat (Human immunodeficiency virus type 1 group M subtype A (isolate U455) (HIV-1)).